Here is a 449-residue protein sequence, read N- to C-terminus: Phosphomannomutase (449 aa).

Ser-97 acts as the Phosphoserine intermediate in catalysis. The Mg(2+) site is built by Ser-97, Asp-237, Asp-239, and Asp-241.

Belongs to the phosphohexose mutase family. It depends on Mg(2+) as a cofactor.

It carries out the reaction alpha-D-mannose 1-phosphate = D-mannose 6-phosphate. It participates in amino-acid biosynthesis. In terms of biological role, catalyzes the formation of mannose-1-P from mannose-6-P. Can also use glucose-6-P. The sequence is that of Phosphomannomutase (manB) from Methanocaldococcus jannaschii (strain ATCC 43067 / DSM 2661 / JAL-1 / JCM 10045 / NBRC 100440) (Methanococcus jannaschii).